Here is a 141-residue protein sequence, read N- to C-terminus: Large ribosomal subunit protein uL11 (141 aa).

The protein belongs to the universal ribosomal protein uL11 family. Part of the ribosomal stalk of the 50S ribosomal subunit. Interacts with L10 and the large rRNA to form the base of the stalk. L10 forms an elongated spine to which L12 dimers bind in a sequential fashion forming a multimeric L10(L12)X complex. In terms of processing, one or more lysine residues are methylated.

Forms part of the ribosomal stalk which helps the ribosome interact with GTP-bound translation factors. The polypeptide is Large ribosomal subunit protein uL11 (Chlamydia caviae (strain ATCC VR-813 / DSM 19441 / 03DC25 / GPIC) (Chlamydophila caviae)).